The sequence spans 504 residues: MTSTRTLRYAQVACACIWCLFSAGIIFGFAALKPILISEGVYHELCDPKDGDRLLCTAQDLKLNFIFALSATVTNIMALPVGKILDMYGPRVCGIIGSCLLFLASGNFISAKHLVSLWDPYLVGYTLLAVAGPFVFISCFQLANSFPQRSGTVLALLTGSFDSSSALFLLYRLLYQNWFPTLNVSRFFTLYLIVPVFILACQLTIMPHSSYKTVNHIAKIAVEGLDENGRLIEGDTGSGIIPDEQERQSLIAIEREEDSIPSRPQRRKSVLETYVEDKLQKKSGGIFGVLHGKSAYEQIKSPWFYLMLLFALVAMLRINYFIATVRTQEEYLLNDPDLALKLNSIFDMLLPLGGAVSIPFIGLLLDHTDTLSTLTILFTTSTAIGVFGLIPNSFTWNLIGIVLLVVYRPFYYTVVSDYSSKVFGFDTFGTVYGLLSCICGIFNMSQNLLDKWTHTTFNMNPFPINLTLVILTVVFSLTLTFYIRSQILPKPVNERGLSSNYQTI.

Residues Met1–Gln11 lie on the Vacuolar side of the membrane. The chain crosses the membrane as a helical span at residues Val12–Leu32. Over Lys33–Asn64 the chain is Cytoplasmic. Residues Phe65–Leu85 form a helical membrane-spanning segment. Topologically, residues Asp86 to Arg91 are vacuolar. Residues Val92–Lys112 form a helical membrane-spanning segment. Topologically, residues His113 to Asp119 are cytoplasmic. The chain crosses the membrane as a helical span at residues Pro120–Phe140. The Vacuolar portion of the chain corresponds to Gln141–Ser150. The chain crosses the membrane as a helical span at residues Gly151–Tyr171. The Cytoplasmic portion of the chain corresponds to Arg172–Arg186. The helical transmembrane segment at Phe187 to Pro207 threads the bilayer. Over His208–Pro302 the chain is Vacuolar. Residues Ser238, Ser249, and Ser269 each carry the phosphoserine modification. Residues Trp303–Ala323 traverse the membrane as a helical segment. Residues Thr324–Ser344 are Cytoplasmic-facing. The helical transmembrane segment at Ile345–Leu365 threads the bilayer. Residues Asp366–Gly385 lie on the Vacuolar side of the membrane. Residues Val386 to Val406 traverse the membrane as a helical segment. At Tyr407–Lys421 the chain is on the cytoplasmic side. The chain crosses the membrane as a helical span at residues Val422 to Phe442. At Asn443–Phe462 the chain is on the vacuolar side. Residues Pro463–Ile483 traverse the membrane as a helical segment. At Arg484–Ile504 the chain is on the cytoplasmic side.

This sequence belongs to the SLC43A transporter (TC 2.A.1.44) family.

It localises to the vacuole membrane. The sequence is that of Protein FMP42 (FMP42) from Saccharomyces cerevisiae (strain ATCC 204508 / S288c) (Baker's yeast).